A 280-amino-acid polypeptide reads, in one-letter code: Dimethylglycine N-methyltransferase (280 aa).

Belongs to the methyltransferase superfamily. In terms of assembly, monomer.

It catalyses the reaction N,N-dimethylglycine + S-adenosyl-L-methionine = glycine betaine + S-adenosyl-L-homocysteine + H(+). It participates in amine and polyamine biosynthesis; betaine biosynthesis via glycine pathway; betaine from glycine: step 3/3. In terms of biological role, catalyzes the methylation of dimethylglycine to betaine with S-adenosylmethionine (AdoMet) acting as the methyl donor. It has strict specificity for dimethylglycine as the methyl group acceptors. The protein is Dimethylglycine N-methyltransferase of Parasynechococcus marenigrum (strain WH8102).